Reading from the N-terminus, the 494-residue chain is Alpha-amylase-related protein (494 aa).

The N-terminal stretch at 1–20 (MFKFASAVILCLVAASSTQA) is a signal peptide. Q21 bears the Pyrrolidone carboxylic acid mark. A disulfide bridge links C48 with C104. Ca(2+)-binding residues include N118, Q169, and D178. A disulfide bridge links C157 with C171. R206 contributes to the chloride binding site. Catalysis depends on D208, which acts as the Nucleophile. Position 212 (H212) interacts with Ca(2+). Residue E245 is the Proton donor of the active site. N308 and R343 together coordinate chloride. 3 disulfides stabilise this stretch: C376–C382, C418–C441, and C448–C460.

Belongs to the glycosyl hydrolase 13 family. As to quaternary structure, monomer. Requires Ca(2+) as cofactor. The cofactor is chloride.

Its subcellular location is the secreted. It carries out the reaction Endohydrolysis of (1-&gt;4)-alpha-D-glucosidic linkages in polysaccharides containing three or more (1-&gt;4)-alpha-linked D-glucose units.. The sequence is that of Alpha-amylase-related protein (Amyrel) from Drosophila ercepeae (Fruit fly).